A 729-amino-acid chain; its full sequence is Fatty acid oxidation complex subunit alpha (729 aa).

Residues 1-189 (MLYKGDTLYL…KIGLVDGVVK (189 aa)) are enoyl-CoA hydratase/isomerase. Position 296 (Asp-296) interacts with substrate. Residues 311-729 (ETPKQAAVLG…ARPVGDLKTA (419 aa)) form a 3-hydroxyacyl-CoA dehydrogenase region. Residues Met-324, Asp-343, 400–402 (VVE), Lys-407, and Ser-429 each bind NAD(+). The active-site For 3-hydroxyacyl-CoA dehydrogenase activity is the His-450. Asn-453 contributes to the NAD(+) binding site. Substrate is bound by residues Asn-500 and Tyr-660. A disordered region spans residues 708–729 (RHNEPYYPPVEPARPVGDLKTA).

It in the N-terminal section; belongs to the enoyl-CoA hydratase/isomerase family. The protein in the C-terminal section; belongs to the 3-hydroxyacyl-CoA dehydrogenase family. In terms of assembly, heterotetramer of two alpha chains (FadB) and two beta chains (FadA).

It carries out the reaction a (3S)-3-hydroxyacyl-CoA + NAD(+) = a 3-oxoacyl-CoA + NADH + H(+). The enzyme catalyses a (3S)-3-hydroxyacyl-CoA = a (2E)-enoyl-CoA + H2O. It catalyses the reaction a 4-saturated-(3S)-3-hydroxyacyl-CoA = a (3E)-enoyl-CoA + H2O. The catalysed reaction is (3S)-3-hydroxybutanoyl-CoA = (3R)-3-hydroxybutanoyl-CoA. It carries out the reaction a (3Z)-enoyl-CoA = a 4-saturated (2E)-enoyl-CoA. The enzyme catalyses a (3E)-enoyl-CoA = a 4-saturated (2E)-enoyl-CoA. The protein operates within lipid metabolism; fatty acid beta-oxidation. Its function is as follows. Involved in the aerobic and anaerobic degradation of long-chain fatty acids via beta-oxidation cycle. Catalyzes the formation of 3-oxoacyl-CoA from enoyl-CoA via L-3-hydroxyacyl-CoA. It can also use D-3-hydroxyacyl-CoA and cis-3-enoyl-CoA as substrate. The sequence is that of Fatty acid oxidation complex subunit alpha from Escherichia coli O139:H28 (strain E24377A / ETEC).